The chain runs to 412 residues: Alpha-2,8-sialyltransferase 8E (412 aa).

At Met-1–Arg-16 the chain is on the cytoplasmic side. The chain crosses the membrane as a helical; Signal-anchor for type II membrane protein span at residues Thr-17–Tyr-37. The Lumenal segment spans residues Ser-38–Cys-412. Asn-58, Asn-64, Asn-73, and Asn-92 each carry an N-linked (GlcNAc...) asparagine glycan. 2 cysteine pairs are disulfide-bonded: Cys-200–Cys-349 and Cys-214–Cys-409. Substrate-binding positions include Asn-228 and Asn-250–Ser-252. N-linked (GlcNAc...) asparagine glycosylation is present at Asn-277. Ser-336–Gly-338 is a binding site for substrate. The active-site Proton donor/acceptor is the His-384.

Belongs to the glycosyltransferase 29 family. In terms of tissue distribution, highly expressed in brain. Expressed at low levels in other tissues, including liver, testis, lung, placenta and spleen.

The protein resides in the golgi apparatus membrane. It carries out the reaction a ganglioside GT1b (d18:1(4E)) + CMP-N-acetyl-beta-neuraminate = a ganglioside GQ1b (d18:1(4E)) + CMP + H(+). The enzyme catalyses a ganglioside GD3 (d18:1(4E)) + CMP-N-acetyl-beta-neuraminate = a ganglioside GT3 (d18:1(4E)) + CMP + H(+). The catalysed reaction is a ganglioside GD1a (d18:1(4E)) + CMP-N-acetyl-beta-neuraminate = a ganglioside GT1a (d18:1(4E)) + CMP + H(+). It catalyses the reaction a ganglioside GM1b (d18:1(4E)) + CMP-N-acetyl-beta-neuraminate = a ganglioside GD1c (d18:1(4E)) + CMP + H(+). It carries out the reaction a ganglioside GQ1c (d18:1(4E)) + CMP-N-acetyl-beta-neuraminate = a ganglioside GP1c (d18:1(4E)) + CMP + H(+). It participates in protein modification; protein glycosylation. Involved in the synthesis of gangliosides GD1c, GT1a, GQ1b, GP1c and GT3 from GD1a, GT1b, GM1b and GD3 respectively. The sequence is that of Alpha-2,8-sialyltransferase 8E from Mus musculus (Mouse).